Here is a 236-residue protein sequence, read N- to C-terminus: tRNA (guanine-N(7)-)-methyltransferase (236 aa).

Positions 35, 60, 87, and 113 each coordinate S-adenosyl-L-methionine. The active site involves Asp113. Lys117 and Asp149 together coordinate substrate.

The protein belongs to the class I-like SAM-binding methyltransferase superfamily. TrmB family.

It carries out the reaction guanosine(46) in tRNA + S-adenosyl-L-methionine = N(7)-methylguanosine(46) in tRNA + S-adenosyl-L-homocysteine. Its pathway is tRNA modification; N(7)-methylguanine-tRNA biosynthesis. In terms of biological role, catalyzes the formation of N(7)-methylguanine at position 46 (m7G46) in tRNA. The protein is tRNA (guanine-N(7)-)-methyltransferase of Prochlorococcus marinus (strain MIT 9303).